Reading from the N-terminus, the 278-residue chain is Dermonecrotic toxin LspiSicTox-betaIE2iii (278 aa).

His-5 is a catalytic residue. Mg(2+)-binding residues include Glu-25 and Asp-27. His-41 (nucleophile) is an active-site residue. 2 disulfide bridges follow: Cys-45–Cys-51 and Cys-47–Cys-190. Asp-85 serves as a coordination point for Mg(2+).

This sequence belongs to the arthropod phospholipase D family. Class II subfamily. Requires Mg(2+) as cofactor. As to expression, expressed by the venom gland.

The protein localises to the secreted. It carries out the reaction an N-(acyl)-sphingosylphosphocholine = an N-(acyl)-sphingosyl-1,3-cyclic phosphate + choline. It catalyses the reaction an N-(acyl)-sphingosylphosphoethanolamine = an N-(acyl)-sphingosyl-1,3-cyclic phosphate + ethanolamine. The enzyme catalyses a 1-acyl-sn-glycero-3-phosphocholine = a 1-acyl-sn-glycero-2,3-cyclic phosphate + choline. The catalysed reaction is a 1-acyl-sn-glycero-3-phosphoethanolamine = a 1-acyl-sn-glycero-2,3-cyclic phosphate + ethanolamine. In terms of biological role, dermonecrotic toxins cleave the phosphodiester linkage between the phosphate and headgroup of certain phospholipids (sphingolipid and lysolipid substrates), forming an alcohol (often choline) and a cyclic phosphate. This toxin acts on sphingomyelin (SM). It may also act on ceramide phosphoethanolamine (CPE), lysophosphatidylcholine (LPC) and lysophosphatidylethanolamine (LPE), but not on lysophosphatidylserine (LPS), and lysophosphatidylglycerol (LPG). It acts by transphosphatidylation, releasing exclusively cyclic phosphate products as second products. Induces dermonecrosis, hemolysis, increased vascular permeability, edema, inflammatory response, and platelet aggregation. The sequence is that of Dermonecrotic toxin LspiSicTox-betaIE2iii from Loxosceles spinulosa (Recluse spider).